The following is a 197-amino-acid chain: Probable molybdenum cofactor guanylyltransferase (197 aa).

GTP contacts are provided by residues 10–12 (LCG), Lys22, Asp73, and Asp102. Asp102 is a Mg(2+) binding site.

This sequence belongs to the MobA family. Requires Mg(2+) as cofactor.

The protein localises to the cytoplasm. It catalyses the reaction Mo-molybdopterin + GTP + H(+) = Mo-molybdopterin guanine dinucleotide + diphosphate. Functionally, transfers a GMP moiety from GTP to Mo-molybdopterin (Mo-MPT) cofactor (Moco or molybdenum cofactor) to form Mo-molybdopterin guanine dinucleotide (Mo-MGD) cofactor. In Methanothermobacter thermautotrophicus (strain ATCC 29096 / DSM 1053 / JCM 10044 / NBRC 100330 / Delta H) (Methanobacterium thermoautotrophicum), this protein is Probable molybdenum cofactor guanylyltransferase.